The chain runs to 429 residues: Adenylosuccinate synthetase (429 aa).

Residues 13-19 (GDEGKGK) and 41-43 (GHT) each bind GTP. Asp-14 functions as the Proton acceptor in the catalytic mechanism. The Mg(2+) site is built by Asp-14 and Gly-41. IMP-binding positions include 14 to 17 (DEGK), 39 to 42 (NAGH), Thr-130, Arg-144, Gln-224, Thr-239, and Arg-303. The active-site Proton donor is the His-42. Residue 299–305 (ATTGRAR) coordinates substrate. GTP contacts are provided by residues Arg-305, 331 to 333 (KLD), and 412 to 414 (STG).

It belongs to the adenylosuccinate synthetase family. In terms of assembly, homodimer. Mg(2+) is required as a cofactor.

It is found in the cytoplasm. The enzyme catalyses IMP + L-aspartate + GTP = N(6)-(1,2-dicarboxyethyl)-AMP + GDP + phosphate + 2 H(+). It functions in the pathway purine metabolism; AMP biosynthesis via de novo pathway; AMP from IMP: step 1/2. Plays an important role in the de novo pathway of purine nucleotide biosynthesis. Catalyzes the first committed step in the biosynthesis of AMP from IMP. This Psychrobacter cryohalolentis (strain ATCC BAA-1226 / DSM 17306 / VKM B-2378 / K5) protein is Adenylosuccinate synthetase.